A 323-amino-acid chain; its full sequence is MIRSVVRGIGSALPKRVMKNTDFEGIIETSDEWIVQRTGIRERHIAGEGETTVSLGAAAARAAIENAGLQPSDIDLVLLATSTPNNTFPASAVAIQRELGITRGFAFDLQAVCSGFIYAITTADLYIRGGMARRVLVIGAETFSRILDWTDRTTCVLFGDGAGAIVLEAAEGHGLTSDRGILAANLRSDGNHKEKLYVDGGPSTTQTVGHLRMEGREVFKHAVGMITDVIEASFEATGLTAEDIDWFVPHQANKRIIDASAKKLHIAEEKVVITVDRHGNTSAASVPLALATAVADGRIKKGDLVLLEAMGGGFTWGAVLVRW.

Residues C113 and H250 contribute to the active site. Positions Q251–R255 are ACP-binding. N280 is a catalytic residue.

This sequence belongs to the thiolase-like superfamily. FabH family. In terms of assembly, homodimer.

Its subcellular location is the cytoplasm. It catalyses the reaction malonyl-[ACP] + acetyl-CoA + H(+) = 3-oxobutanoyl-[ACP] + CO2 + CoA. Its pathway is lipid metabolism; fatty acid biosynthesis. Its function is as follows. Catalyzes the condensation reaction of fatty acid synthesis by the addition to an acyl acceptor of two carbons from malonyl-ACP. Catalyzes the first condensation reaction which initiates fatty acid synthesis and may therefore play a role in governing the total rate of fatty acid production. Possesses both acetoacetyl-ACP synthase and acetyl transacylase activities. Its substrate specificity determines the biosynthesis of branched-chain and/or straight-chain of fatty acids. In Brucella melitensis biotype 2 (strain ATCC 23457), this protein is Beta-ketoacyl-[acyl-carrier-protein] synthase III.